A 179-amino-acid polypeptide reads, in one-letter code: ATP-dependent protease subunit HslV (179 aa).

Threonine 7 is a catalytic residue. Residues alanine 162, cysteine 165, and threonine 168 each contribute to the Na(+) site.

It belongs to the peptidase T1B family. HslV subfamily. A double ring-shaped homohexamer of HslV is capped on each side by a ring-shaped HslU homohexamer. The assembly of the HslU/HslV complex is dependent on binding of ATP.

Its subcellular location is the cytoplasm. The catalysed reaction is ATP-dependent cleavage of peptide bonds with broad specificity.. Its activity is regulated as follows. Allosterically activated by HslU binding. Its function is as follows. Protease subunit of a proteasome-like degradation complex believed to be a general protein degrading machinery. The polypeptide is ATP-dependent protease subunit HslV (Nitrosococcus oceani (strain ATCC 19707 / BCRC 17464 / JCM 30415 / NCIMB 11848 / C-107)).